Here is a 492-residue protein sequence, read N- to C-terminus: GTPase-GDP dissociation stimulator arz1 (492 aa).

The protein resides in the cytoplasm. It is found in the nucleus. Its function is as follows. Probably acts as a GEF (guanine nucleotide exchange factor) for the Rho family of small GTP-binding proteins (G proteins) that stimulates the dissociation of GDP to enable subsequent binding of GTP. May also chaperone the processing and/or trafficking of small GTPases independently of GEF activity. May be involved in the control of polarized cell growth via CDC42-mediated signaling. May also be involved in the control of cell-wall organization via RHO1-mediated signaling. The protein is GTPase-GDP dissociation stimulator arz1 of Schizosaccharomyces pombe (strain 972 / ATCC 24843) (Fission yeast).